Reading from the N-terminus, the 490-residue chain is Protein nucleotidyltransferase YdiU (490 aa).

Residues Gly86, Gly88, Arg89, Lys109, Asp121, Gly122, Arg172, and Arg179 each coordinate ATP. Asp248 (proton acceptor) is an active-site residue. Mg(2+)-binding residues include Asn249 and Asp258. An ATP-binding site is contributed by Asp258.

The protein belongs to the SELO family. Mg(2+) is required as a cofactor. The cofactor is Mn(2+).

It carries out the reaction L-seryl-[protein] + ATP = 3-O-(5'-adenylyl)-L-seryl-[protein] + diphosphate. The enzyme catalyses L-threonyl-[protein] + ATP = 3-O-(5'-adenylyl)-L-threonyl-[protein] + diphosphate. It catalyses the reaction L-tyrosyl-[protein] + ATP = O-(5'-adenylyl)-L-tyrosyl-[protein] + diphosphate. The catalysed reaction is L-histidyl-[protein] + UTP = N(tele)-(5'-uridylyl)-L-histidyl-[protein] + diphosphate. It carries out the reaction L-seryl-[protein] + UTP = O-(5'-uridylyl)-L-seryl-[protein] + diphosphate. The enzyme catalyses L-tyrosyl-[protein] + UTP = O-(5'-uridylyl)-L-tyrosyl-[protein] + diphosphate. Nucleotidyltransferase involved in the post-translational modification of proteins. It can catalyze the addition of adenosine monophosphate (AMP) or uridine monophosphate (UMP) to a protein, resulting in modifications known as AMPylation and UMPylation. This chain is Protein nucleotidyltransferase YdiU, found in Rhizobium meliloti (strain 1021) (Ensifer meliloti).